The primary structure comprises 563 residues: Chitinase A (563 aa).

The N-terminal stretch at 1 to 23 is a signal peptide; that stretch reads MRKFNKPLLALLIGSTLCSAAQA. A GH18 domain is found at 158-559; sequence KVVGSYFVEW…NSMNASLGNS (402 aa). The active-site Proton donor is the E315.

The protein belongs to the glycosyl hydrolase 18 family. Chitinase class II subfamily.

It carries out the reaction Random endo-hydrolysis of N-acetyl-beta-D-glucosaminide (1-&gt;4)-beta-linkages in chitin and chitodextrins.. This Serratia marcescens protein is Chitinase A (chiA).